The primary structure comprises 281 residues: Imidazoleglycerol-phosphate dehydratase, chloroplastic (281 aa).

The transit peptide at 1–85 directs the protein to the chloroplast; sequence MELYAASHSL…TSLPFHPETR (85 aa). Substrate is bound by residues Glu-95, 121–129, 147–151, Arg-173, and Arg-195; these read HMLDQLASH and HHTNE. Residues His-121, His-147, His-148, and Glu-151 each coordinate Mn(2+). 4 residues coordinate Mn(2+): His-219, His-243, His-244, and Glu-247. Residues 243–251 and 273–275 contribute to the substrate site; these read HHIIEATFK and SSK.

This sequence belongs to the imidazoleglycerol-phosphate dehydratase family. Mn(2+) is required as a cofactor.

It localises to the plastid. The protein resides in the chloroplast. It carries out the reaction D-erythro-1-(imidazol-4-yl)glycerol 3-phosphate = 3-(imidazol-4-yl)-2-oxopropyl phosphate + H2O. It participates in amino-acid biosynthesis; L-histidine biosynthesis; L-histidine from 5-phospho-alpha-D-ribose 1-diphosphate: step 6/9. The polypeptide is Imidazoleglycerol-phosphate dehydratase, chloroplastic (Pisum sativum (Garden pea)).